The chain runs to 31 residues: Protamine CIII (31 aa).

Positions 1 to 31 are disordered; that stretch reads MPRRRRASRPVRRRRRPRVSRRRRRGGRRRR.

Testis.

It is found in the nucleus. Its subcellular location is the chromosome. Protamines substitute for histones in the chromatin of sperm during the haploid phase of spermatogenesis. They compact sperm DNA into a highly condensed, stable and inactive complex. This chain is Protamine CIII, found in Oncorhynchus mykiss (Rainbow trout).